We begin with the raw amino-acid sequence, 663 residues long: DNA topoisomerase 4 subunit B (663 aa).

ATP-binding positions include Y21, N61, D88, 130–136, and K360; that span reads GLHGVGI. The Toprim domain occupies 440-554; the sequence is TELFIVEGDS…EGHLYLAKPP (115 aa). Mg(2+)-binding residues include E446, D519, and D521.

Belongs to the type II topoisomerase family. ParE type 1 subfamily. As to quaternary structure, heterotetramer composed of ParC and ParE. The cofactor is Mg(2+). Mn(2+) is required as a cofactor. It depends on Ca(2+) as a cofactor.

It carries out the reaction ATP-dependent breakage, passage and rejoining of double-stranded DNA.. In terms of biological role, topoisomerase IV is essential for chromosome segregation. It relaxes supercoiled DNA. Performs the decatenation events required during the replication of a circular DNA molecule. This Rickettsia typhi (strain ATCC VR-144 / Wilmington) protein is DNA topoisomerase 4 subunit B.